The primary structure comprises 314 residues: tRNA pseudouridine synthase B (314 aa).

A substrate-binding site is contributed by His43. Asp48 acts as the Nucleophile in catalysis. Substrate is bound by residues Tyr76, Tyr179, and Leu200.

The protein belongs to the pseudouridine synthase TruB family. Type 1 subfamily.

It carries out the reaction uridine(55) in tRNA = pseudouridine(55) in tRNA. Responsible for synthesis of pseudouridine from uracil-55 in the psi GC loop of transfer RNAs. The protein is tRNA pseudouridine synthase B of Escherichia coli O139:H28 (strain E24377A / ETEC).